Reading from the N-terminus, the 593-residue chain is Mitochondrial sodium/calcium exchanger protein (593 aa).

A signal peptide spans 1 to 20 (MGPLWALRVAGALSVAGVLA). At 21 to 93 (GHDGSQRAGQ…GAFCTFPSSL (73 aa)) the chain is on the extracellular side. N-linked (GlcNAc...) asparagine glycosylation occurs at N58. The helical transmembrane segment at 94 to 114 (LPLSVSLYALWLLYLFVILGV) threads the bilayer. Residues 115–135 (TAEKFFCPNLSAISTNLKLSH) lie on the Cytoplasmic side of the membrane. A helical membrane pass occupies residues 136-158 (NGLGVVGHSLTPALHGVTFLAFG). The Extracellular segment spans residues 159 to 178 (NGAPDIFSAVVAFSDPRTAG). The helical transmembrane segment at 179-199 (LAVGAIFGAGIFVTTVVAGGI) threads the bilayer. Over 200-215 (ALVKPFAAASRPFLRD) the chain is Cytoplasmic. The chain crosses the membrane as a helical span at residues 216–236 (VIFYMVAVFLTFLVLYFGYIT). The Extracellular segment spans residues 237 to 239 (LGE). Residues 240-260 (ALGYLGLYVFYVFTVVLCTWI) traverse the membrane as a helical segment. The Cytoplasmic segment spans residues 261-334 (HRWQRGDGPP…KWRRKPWYWR (74 aa)). Positions 268–277 (GPPPPGPWEP) are enriched in pro residues. Residues 268-291 (GPPPPGPWEPAIPTDAEEQESSGT) are disordered. The chain crosses the membrane as a helical span at residues 335–355 (LFKVLKVPVELVLLLTVPVVD). Residues 356–369 (PDKDDLNWKRPLNC) are Extracellular-facing. The helical transmembrane segment at 370 to 390 (LHIVTGPLLCIFTLKSGAYGL) threads the bilayer. Topologically, residues 391–395 (YQIQG) are cytoplasmic. A helical membrane pass occupies residues 396–416 (VFPVWALVALAGSVLAIIVFV). At 417-428 (TTHNEEPPKYHC) the chain is on the extracellular side. Residues 429 to 449 (VFAFLGFLSSAMWINAAATEL) traverse the membrane as a helical segment. The Cytoplasmic segment spans residues 450–454 (VNILR). The helical transmembrane segment at 455–475 (TLGIIFELSNTVLGLTLLAWG) threads the bilayer. At 476–496 (NSIGDTFSDLTMARQGYPRMA) the chain is on the extracellular side. A helical membrane pass occupies residues 497 to 517 (FSACFGGIIFNILVGVGLGCL). Topologically, residues 518 to 533 (LQMTNSQMVVKLEPDS) are cytoplasmic. A helical transmembrane segment spans residues 534–554 (LLVWILAGALGLSLVFSFVAV). The Extracellular portion of the chain corresponds to 555–564 (PAQCFQLGKA). A helical membrane pass occupies residues 565–585 (YGTCLILYYLVFLCVALLTEF). The Cytoplasmic segment spans residues 586 to 593 (RVIHLAAT).

It belongs to the Ca(2+):cation antiporter (CaCA) (TC 2.A.19) family. SLC24A subfamily.

Its subcellular location is the mitochondrion inner membrane. It catalyses the reaction Ca(2+)(in) + 3 Na(+)(out) = Ca(2+)(out) + 3 Na(+)(in). Functionally, mitochondrial sodium/calcium antiporter that mediates sodium-dependent calcium efflux from mitochondrion, by mediating the exchange of 3 sodium ions per 1 calcium ion. Plays a central role in mitochondrial calcium homeostasis by mediating mitochondrial calcium extrusion: calcium efflux is essential for mitochondrial function and cell survival, notably in cardiomyocytes. Involved in B-lymphocyte chemotaxis. This is Mitochondrial sodium/calcium exchanger protein from Gallus gallus (Chicken).